Reading from the N-terminus, the 131-residue chain is Ribosomally synthesized cyclic peptide phomopsin precursor gigA (131 aa).

Residues Met1 to Ala18 form the signal peptide. Propeptides lie at residues Ala19–Arg38, Ala48–Arg65, Ala75–Arg92, Ala102–Arg119, and Ala129–Met131.

GigA is processed by several endopeptidases including kexin proteases to produce 2 identical copies of the nonaxapeptide Ile-Asn-Phe-Lys-Ile-Pro-Tyr-Thr-Gly, one copy of the nonaketide Ile-Gly-Phe-Lys-Leu-Pro-Tyr-Arg-Gly and one copy of the nonaketide Pro-Asn-Phe-Lys-Met-Pro-Tyr-Arg-Gly, that are further modified into phomapsins B, C and A, respectively. After being excised from the precursor peptide, the core peptides are cyclized and modified post-translationally by enzymes encoded within the gene cluster. Epichloecyclin biosynthesis requires only dimethylation of the side-chain amino group of the conserved lysine for completion.

It participates in mycotoxin biosynthesis. Ribosomally synthesized cyclic peptide phomopsin precursor; part of the gene cluster that mediates the biosynthesis of the epichloecyclins, a group of nonapeptides, with a likely cyclic structure and dimethylation of the conserved lysine. The gigA translated product contains 4 repeated peptide embedding the nonapeptide Ile-Asn-Phe-Lys-Ile-Pro-Tyr-Thr-Gly in repeats 1 and 2, Ile-Gly-Phe-Lys-Leu-Pro-Tyr-Arg-Gly in repeat 3, and Pro-Asn-Phe-Lys-Met-Pro-Tyr-Arg-Gly in repeat 4 that are converted into epichloecyclins B, C and A, respectively. Moreover, removal of the last Gly residue in epichloecyclins B and C leads to epichloecyclins D and E, respectively. The sequence is that of Ribosomally synthesized cyclic peptide phomopsin precursor gigA (nc25) from Epichloe festucae (strain Fl1).